A 278-amino-acid chain; its full sequence is Elongation factor Ts (278 aa).

Residues 79–82 form an involved in Mg(2+) ion dislocation from EF-Tu region; that stretch reads TDFV.

Belongs to the EF-Ts family.

The protein resides in the cytoplasm. Associates with the EF-Tu.GDP complex and induces the exchange of GDP to GTP. It remains bound to the aminoacyl-tRNA.EF-Tu.GTP complex up to the GTP hydrolysis stage on the ribosome. This chain is Elongation factor Ts, found in Borrelia hermsii (strain HS1 / DAH).